We begin with the raw amino-acid sequence, 200 residues long: Systemin (200 aa).

The disordered stretch occupies residues 1–33 (MGTPSYDIKNKGDDMQEEPKVKLHHEKGGDEKE). 2 consecutive propeptides follow at residues 1 to 178 (MGTP…REDL) and 197 to 200 (NNKL). A 1; truncated repeat occupies 3-8 (TPSYDI). The segment covering 8 to 33 (IKNKGDDMQEEPKVKLHHEKGGDEKE) has biased composition (basic and acidic residues). Repeat copies occupy residues 37-45 (EKETPSQDI), 80-88 (EKETISQYI), 117-125 (EKETPSQDI), and 145-153 (DKETPSQDI). Disordered stretches follow at residues 106-159 (EEEE…MEGE) and 178-200 (LAVQSKPPSKRDPPKMQTDNNKL). 2 stretches are compositionally biased toward basic and acidic residues: residues 111–140 (EKEKIVEKETPSQDINNKGDDAQEKPKVEH) and 146–158 (KETPSQDIIKMEG).

As to expression, all organs except the roots. Transported out of wounds to distal tissues.

Its subcellular location is the cytoplasm. Functionally, activates a lipid-based signal transduction pathway in which linolenic acid is converted to jasmonic acid, a potent activator of defense gene transcription, including proteinase inhibitor. In Solanum lycopersicum (Tomato), this protein is Systemin.